The primary structure comprises 372 residues: DNA replication and repair protein RecF (372 aa).

Position 30-37 (30-37 (GENGQGKT)) interacts with ATP.

Belongs to the RecF family.

The protein localises to the cytoplasm. The RecF protein is involved in DNA metabolism; it is required for DNA replication and normal SOS inducibility. RecF binds preferentially to single-stranded, linear DNA. It also seems to bind ATP. The protein is DNA replication and repair protein RecF of Anaeromyxobacter dehalogenans (strain 2CP-1 / ATCC BAA-258).